We begin with the raw amino-acid sequence, 344 residues long: Ferrochelatase (344 aa).

Fe cation contacts are provided by H214 and E295.

It belongs to the ferrochelatase family.

It localises to the cytoplasm. It catalyses the reaction heme b + 2 H(+) = protoporphyrin IX + Fe(2+). The protein operates within porphyrin-containing compound metabolism; protoheme biosynthesis; protoheme from protoporphyrin-IX: step 1/1. In terms of biological role, catalyzes the ferrous insertion into protoporphyrin IX. This is Ferrochelatase from Allorhizobium ampelinum (strain ATCC BAA-846 / DSM 112012 / S4) (Agrobacterium vitis (strain S4)).